A 648-amino-acid polypeptide reads, in one-letter code: Putative potassium transport protein DDB_G0292412 (648 aa).

The helical transmembrane segment at 48-68 threads the bilayer; the sequence is LFLLVILVQLGSTVLLTLPIV. The N-linked (GlcNAc...) asparagine glycan is linked to Asn-81. Disordered stretches follow at residues 106–145 and 223–261; these read HDFK…DDND and QQQQ…DSQS. Positions 110–129 are enriched in acidic residues; the sequence is DDDDENDNNNNEENDDNDDE. Residues 199–227 adopt a coiled-coil conformation; it reads IIQQQQQQQQQQQQQQQQQQQQQQQQQQQ. N-linked (GlcNAc...) asparagine glycosylation is found at Asn-239, Asn-243, Asn-247, Asn-248, Asn-254, and Asn-257. A run of 6 helical transmembrane segments spans residues 313–333, 353–373, 385–405, 443–463, 472–491, and 505–525; these read LLVI…ISIG, GWWW…LALF, FLLI…PVFL, VQLF…MALL, NMNY…STRT, and SVLL…IISL. An N-linked (GlcNAc...) asparagine glycan is attached at Asn-536. A run of 3 helical transmembrane segments spans residues 550–570, 571–591, and 592–612; these read IFVP…LLES, GVIT…NVGL, and SISI…MLAG.

Belongs to the TrkH potassium transport family.

The protein localises to the membrane. In terms of biological role, may function as a potassium transporter. The polypeptide is Putative potassium transport protein DDB_G0292412 (Dictyostelium discoideum (Social amoeba)).